The following is a 341-amino-acid chain: Pectate trisaccharide-lyase (341 aa).

The N-terminal stretch at Met-1 to Ala-27 is a signal peptide. A propeptide spanning residues Ala-28–Leu-39 is cleaved from the precursor. PbH1 repeat units lie at residues Ala-131–Gly-156 and Ser-158–Lys-186. Ca(2+)-binding residues include Asp-150, Asp-180, and Asp-184. Arg-233 is an active-site residue. PbH1 repeat units follow at residues Gly-262–Tyr-283 and Pro-287–Asn-322.

It belongs to the polysaccharide lyase 1 family. The cofactor is Ca(2+).

It is found in the secreted. It catalyses the reaction eliminative cleavage of unsaturated trigalacturonate as the major product from the reducing end of polygalacturonic acid/pectate.. Cleaves unsaturated oligo-galacturonides from pectin. The major product is trigalacturonate; digalacturonate and tetragalacturonate are also produced. Activity on methylated pectins decreases with an increasing degree of methylation. This Bacillus licheniformis (strain ATCC 14580 / DSM 13 / JCM 2505 / CCUG 7422 / NBRC 12200 / NCIMB 9375 / NCTC 10341 / NRRL NRS-1264 / Gibson 46) protein is Pectate trisaccharide-lyase.